Consider the following 474-residue polypeptide: Nuclear hormone receptor family member nhr-91 (474 aa).

A disordered region spans residues 50 to 69; the sequence is SMTPSFSQTESPNSETDDST. A compositionally biased stretch (polar residues) spans 51–69; that stretch reads MTPSFSQTESPNSETDDST. A DNA-binding region (nuclear receptor) is located at residues 97 to 172; the sequence is SKLCSVCGDK…KGMLTEAVRE (76 aa). 2 consecutive NR C4-type zinc fingers follow at residues 100–120 and 136–155; these read CSVC…CEGC and CSQD…CQSC. The 260-residue stretch at 215–474 folds into the NR LBD domain; the sequence is SGKKLIKELV…KNPRRLVFDE (260 aa).

The protein belongs to the nuclear hormone receptor family.

The protein localises to the nucleus. Functionally, orphan nuclear receptor. The polypeptide is Nuclear hormone receptor family member nhr-91 (nhr-91) (Caenorhabditis elegans).